A 759-amino-acid chain; its full sequence is Subtilisin-like protease SBT3.16 (759 aa).

The signal sequence occupies residues 1 to 33 (MELSSLIVPNNKKHFVVVFIGLVLIFKIALITA). Positions 34–119 (ANEKSQIYTV…VTRSKNMKLK (86 aa)) are cleaved as a propeptide — activation peptide. Residues 41–118 (YTVHLGERQH…RVTRSKNMKL (78 aa)) enclose the Inhibitor I9 domain. The region spanning 124 to 608 (SDYLGLTSAA…GGLVNPVKVA (485 aa)) is the Peptidase S8 domain. Residue aspartate 153 is the Charge relay system of the active site. Asparagine 186 and asparagine 209 each carry an N-linked (GlcNAc...) asparagine glycan. Catalysis depends on histidine 229, which acts as the Charge relay system. Asparagine 371 carries an N-linked (GlcNAc...) asparagine glycan. The Charge relay system role is filled by serine 539. N-linked (GlcNAc...) asparagine glycans are attached at residues asparagine 632 and asparagine 711.

The protein belongs to the peptidase S8 family.

It is found in the secreted. The protein is Subtilisin-like protease SBT3.16 of Arabidopsis thaliana (Mouse-ear cress).